The primary structure comprises 362 residues: Phosphoserine aminotransferase (362 aa).

Arg-43 contacts L-glutamate. Residues 77–78 (AT), Trp-103, Thr-153, Asp-173, and Gln-196 contribute to the pyridoxal 5'-phosphate site. N6-(pyridoxal phosphate)lysine is present on Lys-197. 238 to 239 (NT) serves as a coordination point for pyridoxal 5'-phosphate.

It belongs to the class-V pyridoxal-phosphate-dependent aminotransferase family. SerC subfamily. As to quaternary structure, homodimer. The cofactor is pyridoxal 5'-phosphate.

The protein localises to the cytoplasm. The enzyme catalyses O-phospho-L-serine + 2-oxoglutarate = 3-phosphooxypyruvate + L-glutamate. It catalyses the reaction 4-(phosphooxy)-L-threonine + 2-oxoglutarate = (R)-3-hydroxy-2-oxo-4-phosphooxybutanoate + L-glutamate. It participates in amino-acid biosynthesis; L-serine biosynthesis; L-serine from 3-phospho-D-glycerate: step 2/3. The protein operates within cofactor biosynthesis; pyridoxine 5'-phosphate biosynthesis; pyridoxine 5'-phosphate from D-erythrose 4-phosphate: step 3/5. Its function is as follows. Catalyzes the reversible conversion of 3-phosphohydroxypyruvate to phosphoserine and of 3-hydroxy-2-oxo-4-phosphonooxybutanoate to phosphohydroxythreonine. The protein is Phosphoserine aminotransferase of Acidithiobacillus ferrooxidans (strain ATCC 23270 / DSM 14882 / CIP 104768 / NCIMB 8455) (Ferrobacillus ferrooxidans (strain ATCC 23270)).